The sequence spans 281 residues: Phosphate import ATP-binding protein PstB (281 aa).

Residues 33-276 form the ABC transporter domain; the sequence is FKIENLSLWY…PQLKRTRDYI (244 aa). 67–74 contributes to the ATP binding site; it reads GPSGCGKS.

Belongs to the ABC transporter superfamily. Phosphate importer (TC 3.A.1.7) family. The complex is composed of two ATP-binding proteins (PstB), two transmembrane proteins (PstC and PstA) and a solute-binding protein (PstS).

It localises to the cell membrane. It catalyses the reaction phosphate(out) + ATP + H2O = ADP + 2 phosphate(in) + H(+). In terms of biological role, part of the ABC transporter complex PstSACB involved in phosphate import. Responsible for energy coupling to the transport system. This chain is Phosphate import ATP-binding protein PstB, found in Mycoplasma mobile (strain ATCC 43663 / 163K / NCTC 11711) (Mesomycoplasma mobile).